Here is a 1862-residue protein sequence, read N- to C-terminus: Transient receptor potential cation channel subfamily M member 7 (1862 aa).

Met-1 is modified (N-acetylmethionine). Over Met-1–His-850 the chain is Cytoplasmic. A Phosphoserine modification is found at Ser-101. A compositionally biased stretch (low complexity) spans Asn-544–Ser-554. The disordered stretch occupies residues Asn-544 to Lys-574. Over residues Lys-560–Glu-573 the composition is skewed to basic and acidic residues. The chain crosses the membrane as a helical span at residues Ala-851–Val-876. Topologically, residues Gln-877–Pro-882 are extracellular. Residues Ser-883–Val-904 form a helical membrane-spanning segment. Topologically, residues Phe-905 to Tyr-923 are cytoplasmic. Residues Phe-924–Phe-943 traverse the membrane as a helical segment. Over Gly-944–His-956 the chain is Extracellular. A helical membrane pass occupies residues Val-957–Leu-980. The Cytoplasmic segment spans residues Ala-981–Asn-999. Residues Met-1000 to Tyr-1023 traverse the membrane as a helical segment. At Pro-1024–His-1025 the chain is on the extracellular side. The pore-forming intramembrane region spans Glu-1026–Cys-1066. Residues Gly-1067–Gly-1069 lie on the Extracellular side of the membrane. The chain crosses the membrane as a helical span at residues Thr-1070–Asn-1098. Over Val-1099–Leu-1862 the chain is Cytoplasmic. S-palmitoyl cysteine attachment occurs at residues Cys-1143, Cys-1144, and Cys-1146. A Phosphothreonine modification is found at Thr-1163. Phosphoserine occurs at positions 1191, 1193, 1224, 1255, and 1258. Positions Arg-1198 to Thr-1250 form a coiled coil. Thr-1265 carries the phosphothreonine modification. Phosphoserine is present on residues Ser-1300, Ser-1357, Ser-1360, Ser-1385, Ser-1386, Ser-1389, Ser-1394, Ser-1395, and Ser-1403. The interval Asn-1380–Thr-1418 is disordered. Positions Ser-1385 to Pro-1397 are enriched in low complexity. Over residues Thr-1398–Cys-1410 the composition is skewed to polar residues. Thr-1404 is modified (phosphothreonine). Residues Ser-1406 and Ser-1445 each carry the phosphoserine modification. Thr-1454 bears the Phosphothreonine mark. Phosphoserine is present on Ser-1455. Residues Thr-1466 and Thr-1470 each carry the phosphothreonine modification. The segment at Thr-1485–Arg-1511 is disordered. Phosphoserine occurs at positions 1491, 1497, 1501, 1510, and 1530. Over residues Ser-1491–Thr-1502 the composition is skewed to basic and acidic residues. Phosphothreonine is present on Thr-1534. Phosphoserine is present on Ser-1540. The residue at position 1548 (Thr-1548) is a Phosphothreonine. Ser-1564 and Ser-1566 each carry phosphoserine. The residue at position 1580 (Thr-1580) is a Phosphothreonine. The Alpha-type protein kinase domain maps to Ile-1591 to Leu-1821. Ser-1595 and Ser-1612 each carry phosphoserine. ADP is bound by residues Gly-1618, Gly-1619, Leu-1620, Arg-1621, and Lys-1645. A Phosphoserine modification is found at Ser-1657. A Phosphothreonine modification is found at Thr-1682. Residues Glu-1717, Glu-1718, and Met-1720 each contribute to the ADP site. His-1750 contributes to the Zn(2+) binding site. Asp-1764 serves as the catalytic Proton acceptor. Asp-1774 serves as a coordination point for ADP. Ser-1776 carries the post-translational modification Phosphoserine. Zn(2+) is bound by residues His-1807, Cys-1809, and Cys-1813. Thr-1827 is subject to Phosphothreonine. Positions Asp-1840–Leu-1862 are disordered. Residues Ser-1848 and Ser-1857 each carry the phosphoserine modification.

In the C-terminal section; belongs to the protein kinase superfamily. Alpha-type protein kinase family. ALPK subfamily. The protein in the N-terminal section; belongs to the transient receptor (TC 1.A.4) family. LTrpC subfamily. TRPM7 sub-subfamily. As to quaternary structure, homodimer. Homotetramer. Forms heteromers with TRPM6; heteromeric channels are functionally different from the homomeric channels. Interacts with PLCB1. The cofactor is Zn(2+). Palmitoylated; palmitoylation at Cys-1143, Cys-1144 and Cys-1146 promotes TRPM7 trafficking from the Golgi to the surface membrane. In terms of processing, autophosphorylated; autophosphorylation regulates TRPM7 kinase activity towards its substrates. Post-translationally, the C-terminal kinase domain can be cleaved from the channel segment in a cell-type-specific fashion. TRPM7 is cleaved by caspase-8, dissociating the kinase from the ion-conducting pore. The cleaved kinase fragments (M7CKs) can translocate to the cell nucleus and binds chromatin-remodeling complex proteins in a Zn(2+)-dependent manner to ultimately phosphorylate specific Ser/Thr residues of histones.

It is found in the cell membrane. The protein localises to the cytoplasmic vesicle membrane. The protein resides in the nucleus. The catalysed reaction is L-seryl-[protein] + ATP = O-phospho-L-seryl-[protein] + ADP + H(+). It catalyses the reaction L-threonyl-[protein] + ATP = O-phospho-L-threonyl-[protein] + ADP + H(+). The enzyme catalyses Mg(2+)(in) = Mg(2+)(out). It carries out the reaction Ca(2+)(in) = Ca(2+)(out). The catalysed reaction is Zn(2+)(in) = Zn(2+)(out). Its activity is regulated as follows. Channel displays constitutive activity. Channel activity is negatively regulated by cytosolic Mg(2+), Mg-ATP, low intracellular pH. Resting free cytosolic Mg(2+) and Mg-ATP concentrations seem to be sufficient to block native TRPM7 channel activity. TRPM7 channel activity is highly dependent on membrane levels of phosphatidylinositol 4,5 bisphosphate (PIP2). PIP2 hydrolysis negatively regulates TRPM7 channel activity. TRPM7 kinase activity does not affect channel activity. The kinase activity is controlled through the autophosphorylation of a serine/threonine-rich region located N-terminal to the catalytic domain. Functionally, bifunctional protein that combines an ion channel with an intrinsic kinase domain, enabling it to modulate cellular functions either by conducting ions through the pore or by phosphorylating downstream proteins via its kinase domain. The channel is highly permeable to divalent cations, specifically calcium (Ca2+), magnesium (Mg2+) and zinc (Zn2+) and mediates their influx. Controls a wide range of biological processes such as Ca2(+), Mg(2+) and Zn(2+) homeostasis, vesicular Zn(2+) release channel and intracellular Ca(2+) signaling, embryonic development, immune responses, cell motility, proliferation and differentiation. The C-terminal alpha-kinase domain autophosphorylates cytoplasmic residues of TRPM7. TRPM7 phosphorylates SMAD2, suggesting that TRPM7 kinase may play a role in activating SMAD signaling pathways. In vitro, TRPM7 kinase phosphorylates ANXA1 (annexin A1), myosin II isoforms and a variety of proteins with diverse cellular functions. The cleaved channel exhibits substantially higher current and potentiates Fas receptor signaling. In terms of biological role, the C-terminal kinase domain can be cleaved from the channel segment in a cell-type-specific fashion. In immune cells, the TRPM7 kinase domain is clipped from the channel domain by caspases in response to Fas-receptor stimulation. The cleaved kinase fragments can translocate to the nucleus, and bind chromatin-remodeling complex proteins in a Zn(2+)-dependent manner to ultimately phosphorylate specific Ser/Thr residues of histones known to be functionally important for cell differentiation and embryonic development. The chain is Transient receptor potential cation channel subfamily M member 7 from Rattus norvegicus (Rat).